A 297-amino-acid chain; its full sequence is Pyrroline-5-carboxylate reductase 1 (297 aa).

The protein belongs to the pyrroline-5-carboxylate reductase family.

It localises to the cytoplasm. It carries out the reaction L-proline + NADP(+) = (S)-1-pyrroline-5-carboxylate + NADPH + 2 H(+). The enzyme catalyses L-proline + NAD(+) = (S)-1-pyrroline-5-carboxylate + NADH + 2 H(+). It functions in the pathway amino-acid biosynthesis; L-proline biosynthesis; L-proline from L-glutamate 5-semialdehyde: step 1/1. In terms of biological role, catalyzes the reduction of 1-pyrroline-5-carboxylate (PCA) to L-proline. The protein is Pyrroline-5-carboxylate reductase 1 (proH) of Bacillus spizizenii (strain ATCC 23059 / NRRL B-14472 / W23) (Bacillus subtilis subsp. spizizenii).